A 1690-amino-acid chain; its full sequence is MAGVGPGGYAAEFVPPPECPVFEPSWEEFTDPLSFIGRIRPLAEKTGICKIRPPKDWQPPFACEVKSFRFTPRVQRLNELEAMTRVRLDFLDQLAKFWELQGSTLKIPVVERKILDLYALSKIVASKGGFEMVTKEKKWSKVGSRLGYLPGKGTGSLLKSHYERILYPYELFQSGVSLMGVQMPNLDLKEKVEPEVLSTDTQTSPEPGTRMNILPKRTRRVKTQSESGDVSRNTELKKLQIFGAGPKVVGLAMGTKDKEDEVTRRRKVTNRSDAFNMQMRQRKGTLSVNFVDLYVCMFCGRGNNEDKLLLCDGCDDSYHTFCLIPPLPDVPKGDWRCPKCVAEECSKPREAFGFEQAVREYTLQSFGEMADNFKSDYFNMPVHMVPTELVEKEFWRLVSSIEEDVIVEYGADISSKDFGSGFPVKDGRRKILPEEEEYALSGWNLNNMPVLEQSVLAHINVDISGMKVPWLYVGMCFSSFCWHIEDHWSYSINYLHWGEPKTWYGVPSHAAEQLEEVMRELAPELFESQPDLLHQLVTIMNPNVLMEHGVPVYRTNQCAGEFVVTFPRAYHSGFNQGYNFAEAVNFCTADWLPIGRQCVNHYRRLRRHCVFSHEELIFKMAADPECLDVGLAAMVCKELTLMTEEETRLRESVVQMGVLMSEEEVFELVPDDERQCSACRTTCFLSALTCSCNPERLVCLYHPTDLCPCPMQKKCLRYRYPLEDLPSLLYGVKVRAQSYDTWVSRVTEALSANFNHKKDLIELRVMLEDAEDRKYPENDLFRKLRDAVKEAETCASVAQLLLSKKQKHRQSPDSGRTRTKLTVEELKAFVQQLFSLPCVISQARQVKNLLDDVEEFHERAQEAMMDETPDSSKLQMLIDMGSSLYVELPELPRLKQELQQARWLDEVRLTLSDPQQVTLDVMKKLIDSGVGLAPHHAVEKAMAELQELLTVSERWEEKAKVCLQARPRHSVASLESIVNEAKNIPAFLPNVLSLKEALQKAREWTAKVEAIQSGSNYAYLEQLESLSAKGRPIPVRLEALPQVESQVAAARAWRERTGRTFLKKNSSHTLLQVLSPRTDIGVYGSGKNRRKKVKELIEKEKEKDLDLEPLSDLEEGLEETRDTAMVVAVFKEREQKEIEAMHSLRAANLAKMTMVDRIEEVKFCICRKTASGFMLQCELCKDWFHNSCVPLPKSSSQKKGSSWQAKEVKFLCPLCMRSRRPRLETILSLLVSLQKLPVRLPEGEALQCLTERAMSWQDRARQALATDELSSALAKLSVLSQRMVEQAAREKTEKIISAELQKAAANPDLQGHLPSFQQSAFNRVVSSVSSSPRQTMDYDDEETDSDEDIRETYGYDMKDTASVKSSSSLEPNLFCDEEIPIKSEEVVTHMWTAPSFCAEHAYSSASKSCSQGSSTPRKQPRKSPLVPRSLEPPVLELSPGAKAQLEELMMVGDLLEVSLDETQHIWRILQATHPPSEDRFLHIMEDDSMEEKPLKVKGKDSSEKKRKRKLEKVEQLFGEGKQKSKELKKMDKPRKKKLKLGADKSKELNKLAKKLAKEEERKKKKEKAAAAKVELVKESTEKKREKKVLDIPSKYDWSGAEESDDENAVCAAQNCQRPCKDKVDWVQCDGGCDEWFHQVCVGVSPEMAENEDYICINCAKKQGPVSPGPAPPPSFIMSYKLPMEDLKETS.

Residues 19 to 60 (CPVFEPSWEEFTDPLSFIGRIRPLAEKTGICKIRPPKDWQPP) form the JmjN domain. An ARID domain is found at 84–174 (TRVRLDFLDQ…ILYPYELFQS (91 aa)). Lys-191 is covalently cross-linked (Glycyl lysine isopeptide (Lys-Gly) (interchain with G-Cter in SUMO2)). Ser-204 is modified (phosphoserine). Residues 293-343 (LYVCMFCGRGNNEDKLLLCDGCDDSYHTFCLIPPLPDVPKGDWRCPKCVAE) form a PHD-type 1 zinc finger. Residue Tyr-409 participates in 2-oxoglutarate binding. The short motif at 419-423 (GSGFP) is the GSGFP motif element. One can recognise a JmjC domain in the interval 437-603 (EYALSGWNLN…IGRQCVNHYR (167 aa)). Residues His-483 and Glu-485 each contribute to the Fe cation site. Residues Ser-491, Asn-493, and Lys-501 each coordinate 2-oxoglutarate. Position 571 (His-571) interacts with Fe cation. Residues 676–728 (CSACRTTCFLSALTCSCNPERLVCLYHPTDLCPCPMQKKCLRYRYPLEDLPSL) form a C5HC2 zinc finger. A Glycyl lysine isopeptide (Lys-Gly) (interchain with G-Cter in SUMO2) cross-link involves residue Lys-1007. Ser-1111 carries the phosphoserine modification. Residues 1161–1218 (VKFCICRKTASGFMLQCELCKDWFHNSCVPLPKSSSQKKGSSWQAKEVKFLCPLCMRS) form a PHD-type 2 zinc finger. Disordered regions lie at residues 1327 to 1348 (SVSS…SDED) and 1407 to 1433 (KSCS…LEPP). Phosphoserine is present on residues Ser-1330 and Ser-1331. Positions 1337 to 1348 (DYDDEETDSDED) are enriched in acidic residues. At Thr-1343 the chain carries Phosphothreonine. Ser-1345 carries the phosphoserine modification. 2 positions are modified to phosphoserine: Ser-1438 and Ser-1488. Composition is skewed to basic and acidic residues over residues 1490-1503 (EEKP…DSSE) and 1520-1530 (GKQKSKELKKM). 2 disordered regions span residues 1490–1509 (EEKP…RKRK) and 1516–1543 (LFGE…LGAD). Residue Tyr-1595 is modified to Phosphotyrosine. A phosphoserine mark is found at Ser-1598 and Ser-1603. The PHD-type 3 zinc finger occupies 1607–1661 (NAVCAAQNCQRPCKDKVDWVQCDGGCDEWFHQVCVGVSPEMAENEDYICINCAKK). Positions 1623–1690 (VDWVQCDGGC…LPMEDLKETS (68 aa)) are interaction with LMO2. Position 1666 is a phosphoserine (Ser-1666).

It belongs to the JARID1 histone demethylase family. As to quaternary structure, interacts with SUZ12; the interaction is direct. Interacts with the viral protein-binding domain of RB1. Interacts with ESR1, MYC, MYCN and LMO2. Interacts with HDAC1; this interaction impairs histone deacetylation by HDAC1. Interacts with BMAL1 and CLOCK. Interacts (via PHD-type 1 zinc finger) with histone H3 unmodified at 'Lys-4' and (via PHD-type 3 zinc finger) with histone H3 di- and trimethylated at 'Lys-4'. Fe(2+) serves as cofactor.

It localises to the nucleus. Its subcellular location is the nucleolus. The catalysed reaction is N(6),N(6),N(6)-trimethyl-L-lysyl(4)-[histone H3] + 3 2-oxoglutarate + 3 O2 = L-lysyl(4)-[histone H3] + 3 formaldehyde + 3 succinate + 3 CO2. Its activity is regulated as follows. The inhibitors KDOAM-25, CPI-455 and others inhibits its demethylase activity, resulting to cell growth arrest in cancer cells. Its function is as follows. Histone demethylase that specifically demethylates 'Lys-4' of histone H3, thereby playing a central role in histone code. Does not demethylate histone H3 'Lys-9', H3 'Lys-27', H3 'Lys-36', H3 'Lys-79' or H4 'Lys-20'. Demethylates trimethylated and dimethylated but not monomethylated H3 'Lys-4'. Regulates specific gene transcription through DNA-binding on 5'-CCGCCC-3' motif. May stimulate transcription mediated by nuclear receptors. Involved in transcriptional regulation of Hox proteins during cell differentiation. May participate in transcriptional repression of cytokines such as CXCL12. Plays a role in the regulation of the circadian rhythm and in maintaining the normal periodicity of the circadian clock. In a histone demethylase-independent manner, acts as a coactivator of the CLOCK-BMAL1-mediated transcriptional activation of PER1/2 and other clock-controlled genes and increases histone acetylation at PER1/2 promoters by inhibiting the activity of HDAC1. Seems to act as a transcriptional corepressor for some genes such as MT1F and to favor the proliferation of cancer cells. This is Lysine-specific demethylase 5A from Homo sapiens (Human).